Consider the following 196-residue polypeptide: UMP-CMP kinase (196 aa).

13 to 18 (GAGKGT) lines the ATP pocket. Position 33 is a phosphoserine (Ser33). The tract at residues 33–63 (SAGELLRDERKNPDSQYGELIEKYIKEGKIV) is NMP. Arg39 provides a ligand contact to a ribonucleoside 5'-phosphate. Lys43 and Lys55 each carry N6-acetyllysine. A ribonucleoside 5'-phosphate is bound at residue 61 to 63 (KIV). Lys73 participates in a covalent cross-link: Glycyl lysine isopeptide (Lys-Gly) (interchain with G-Cter in SUMO2). 93-96 (GFPR) is an a ribonucleoside 5'-phosphate binding site. Asn100 serves as a coordination point for CMP. Lys106 carries the N6-succinyllysine modification. Positions 133 to 143 (ERGKSSGRSDD) are LID. Arg134 contributes to the ATP binding site. A ribonucleoside 5'-phosphate-binding residues include Arg140 and Arg151. Lys179 is an ATP binding site. Residue Ser180 is modified to Phosphoserine.

The protein belongs to the adenylate kinase family. UMP-CMP kinase subfamily. In terms of assembly, monomer. Mg(2+) is required as a cofactor.

The protein resides in the nucleus. It localises to the cytoplasm. The enzyme catalyses CMP + ATP = CDP + ADP. It carries out the reaction dCMP + ATP = dCDP + ADP. It catalyses the reaction UMP + ATP = UDP + ADP. The catalysed reaction is a 2'-deoxyribonucleoside 5'-diphosphate + ATP = a 2'-deoxyribonucleoside 5'-triphosphate + ADP. The enzyme catalyses a ribonucleoside 5'-diphosphate + ATP = a ribonucleoside 5'-triphosphate + ADP. In terms of biological role, catalyzes the phosphorylation of pyrimidine nucleoside monophosphates at the expense of ATP. Plays an important role in de novo pyrimidine nucleotide biosynthesis. Has preference for UMP and CMP as phosphate acceptors. Also displays broad nucleoside diphosphate kinase activity. The sequence is that of UMP-CMP kinase (Cmpk1) from Mus musculus (Mouse).